We begin with the raw amino-acid sequence, 767 residues long: DNA topoisomerase 1 (767 aa).

Residues M1 to K23 are compositionally biased toward basic and acidic residues. Residues M1–E201 are disordered. An N-acetylserine modification is found at S2. S2 and S10 each carry phosphoserine. The segment covering H24–K39 has biased composition (basic residues). A compositionally biased stretch (basic and acidic residues) spans K40–N110. S59 is subject to Phosphoserine. K103 is covalently cross-linked (Glycyl lysine isopeptide (Lys-Gly) (interchain with G-Cter in SUMO2)). K105 is covalently cross-linked (Glycyl lysine isopeptide (Lys-Gly) (interchain with G-Cter in SUMO); alternate). K105 is covalently cross-linked (Glycyl lysine isopeptide (Lys-Gly) (interchain with G-Cter in SUMO2); alternate). Phosphoserine is present on S114. K119 is covalently cross-linked (Glycyl lysine isopeptide (Lys-Gly) (interchain with G-Cter in SUMO); alternate). A Glycyl lysine isopeptide (Lys-Gly) (interchain with G-Cter in SUMO2); alternate cross-link involves residue K119. K119 participates in a covalent cross-link: Glycyl lysine isopeptide (Lys-Gly) (interchain with G-Cter in SUMO1); alternate. Over residues P131–E168 the composition is skewed to basic and acidic residues. Residues K136 and K150 each participate in a glycyl lysine isopeptide (Lys-Gly) (interchain with G-Cter in SUMO2) cross-link. Residue K155 forms a Glycyl lysine isopeptide (Lys-Gly) (interchain with G-Cter in SUMO); alternate linkage. Residue K155 forms a Glycyl lysine isopeptide (Lys-Gly) (interchain with G-Cter in SUMO2); alternate linkage. Residues K160 and K166 each participate in a glycyl lysine isopeptide (Lys-Gly) (interchain with G-Cter in SUMO2) cross-link. K174 is covalently cross-linked (Glycyl lysine isopeptide (Lys-Gly) (interchain with G-Cter in SUMO2); alternate). K174 bears the N6-acetyllysine; alternate mark. Over residues K181–E201 the composition is skewed to basic and acidic residues. K206 participates in a covalent cross-link: Glycyl lysine isopeptide (Lys-Gly) (interchain with G-Cter in SUMO2). Residue K282 is modified to N6-acetyllysine. A Glycyl lysine isopeptide (Lys-Gly) (interchain with G-Cter in SUMO2) cross-link involves residue K338. Interaction with DNA regions lie at residues K427–Y428 and R490–K495. The 334-residue stretch at S434–F767 folds into the Topo IB-type catalytic domain. A Phosphoserine; by CK2 modification is found at S508. K551 is covalently cross-linked (Glycyl lysine isopeptide (Lys-Gly) (interchain with G-Cter in SUMO2)). An interaction with DNA region spans residues T587 to K589. Residues K644, K702, and K714 each participate in a glycyl lysine isopeptide (Lys-Gly) (interchain with G-Cter in SUMO2) cross-link. Catalysis depends on Y725, which acts as the O-(3'-phospho-DNA)-tyrosine intermediate.

It belongs to the type IB topoisomerase family. Monomer. Interacts with ERCC6. Interacts with TPRN; TPRN interacts with a number of DNA damage response proteins, is recruited to sites of DNA damage and may play a role in DNA damage repair. Sumoylated. Lys-119 is the main site of sumoylation. Sumoylation plays a role in partitioning TOP1 between nucleoli and nucleoplasm. Levels are dramatically increased on camptothecin (CPT) treatment. In terms of processing, phosphorylation at Ser-508 by CK2 increases binding to supercoiled DNA and sensitivity to camptothecin.

Its subcellular location is the nucleus. It is found in the nucleolus. It localises to the nucleoplasm. The catalysed reaction is ATP-independent breakage of single-stranded DNA, followed by passage and rejoining.. In terms of biological role, releases the supercoiling and torsional tension of DNA introduced during the DNA replication and transcription by transiently cleaving and rejoining one strand of the DNA duplex. Introduces a single-strand break via transesterification at a target site in duplex DNA. The scissile phosphodiester is attacked by the catalytic tyrosine of the enzyme, resulting in the formation of a DNA-(3'-phosphotyrosyl)-enzyme intermediate and the expulsion of a 5'-OH DNA strand. The free DNA strand then rotates around the intact phosphodiester bond on the opposing strand, thus removing DNA supercoils. Finally, in the religation step, the DNA 5'-OH attacks the covalent intermediate to expel the active-site tyrosine and restore the DNA phosphodiester backbone. Regulates the alternative splicing of tissue factor (F3) pre-mRNA in endothelial cells. Involved in the circadian transcription of the core circadian clock component BMAL1 by altering the chromatin structure around the ROR response elements (ROREs) on the BMAL1 promoter. This chain is DNA topoisomerase 1 (Top1), found in Mus musculus (Mouse).